The primary structure comprises 441 residues: MTKKVSIRTFGCQMNQADTEIISSLLTAEGYCLVAEEDDADLVMLNTCAVRENAVEKIMHHLDSLKGLRRRRRGLVVGVIGCVPQYYREEMFQKSGVIDFIAGPDSYRKLPGLIRNAFQGIRGAELFLTQSETYGDIEPMRSGSISAFIPVMRGCNNMCAFCVVPFTRGRERSRSLQSVLDEVRRLEGQGYRELTLLGQNVNSYRDDEAGADFALLLDEVSKAAGEMRVRFTTSHPKDISEDLVNVVAQRENVCNAIHLPVQSGSSRMLEVMHRGHTRREYLDKIAMIRSAVPGVALSTDLIAGFCGETEEDHLQTLSLMEEVRFDYAYMFYYSVRPGTYAARHLTDDVALEEKKRRLQEIIDLQSGISGEIFGNDVGSVQEVLAESESRRSSDMLMGRSDTNRVVVFDRQHYQPGDLVRVVIESSTQATLIGRCQDPGEG.

Positions 3 to 119 (KKVSIRTFGC…LPGLIRNAFQ (117 aa)) constitute an MTTase N-terminal domain. The [4Fe-4S] cluster site is built by C12, C48, C82, C155, C159, and C162. A Radical SAM core domain is found at 141-371 (RSGSISAFIP…IDLQSGISGE (231 aa)). The TRAM domain maps to 374–437 (GNDVGSVQEV…QATLIGRCQD (64 aa)).

Belongs to the methylthiotransferase family. MiaB subfamily. Monomer. [4Fe-4S] cluster serves as cofactor.

It is found in the cytoplasm. The catalysed reaction is N(6)-dimethylallyladenosine(37) in tRNA + (sulfur carrier)-SH + AH2 + 2 S-adenosyl-L-methionine = 2-methylsulfanyl-N(6)-dimethylallyladenosine(37) in tRNA + (sulfur carrier)-H + 5'-deoxyadenosine + L-methionine + A + S-adenosyl-L-homocysteine + 2 H(+). Its function is as follows. Catalyzes the methylthiolation of N6-(dimethylallyl)adenosine (i(6)A), leading to the formation of 2-methylthio-N6-(dimethylallyl)adenosine (ms(2)i(6)A) at position 37 in tRNAs that read codons beginning with uridine. This is tRNA-2-methylthio-N(6)-dimethylallyladenosine synthase from Prosthecochloris aestuarii (strain DSM 271 / SK 413).